The following is a 329-amino-acid chain: 4-hydroxythreonine-4-phosphate dehydrogenase (329 aa).

His-136 and Thr-137 together coordinate substrate. Residues His-166, His-211, and His-266 each coordinate a divalent metal cation. Substrate-binding residues include Lys-274, Asn-283, and Arg-292.

Belongs to the PdxA family. Homodimer. Zn(2+) serves as cofactor. It depends on Mg(2+) as a cofactor. Requires Co(2+) as cofactor.

It localises to the cytoplasm. It carries out the reaction 4-(phosphooxy)-L-threonine + NAD(+) = 3-amino-2-oxopropyl phosphate + CO2 + NADH. The protein operates within cofactor biosynthesis; pyridoxine 5'-phosphate biosynthesis; pyridoxine 5'-phosphate from D-erythrose 4-phosphate: step 4/5. Catalyzes the NAD(P)-dependent oxidation of 4-(phosphooxy)-L-threonine (HTP) into 2-amino-3-oxo-4-(phosphooxy)butyric acid which spontaneously decarboxylates to form 3-amino-2-oxopropyl phosphate (AHAP). The protein is 4-hydroxythreonine-4-phosphate dehydrogenase of Escherichia fergusonii (strain ATCC 35469 / DSM 13698 / CCUG 18766 / IAM 14443 / JCM 21226 / LMG 7866 / NBRC 102419 / NCTC 12128 / CDC 0568-73).